A 159-amino-acid chain; its full sequence is MIRFTQVINSEGRDNFTDRENCLIVCLTMDERTKSRLKVCLNNGDEAGLFLPRGTVLKEGDLLQAETGEIALVEAAEEVVSTAFTDDLLLLAKACYHLGNRHVPLQVELGWCRYLHDHVLDDMVKGLGLGVRVERAKYQPEPGAYGGSISGASHGHHHH.

The protein belongs to the UreE family.

It is found in the cytoplasm. Involved in urease metallocenter assembly. Binds nickel. Probably functions as a nickel donor during metallocenter assembly. The sequence is that of Urease accessory protein UreE from Vibrio parahaemolyticus.